The following is a 306-amino-acid chain: Pantothenate kinase (306 aa).

91 to 98 (GSVAVGKS) serves as a coordination point for ATP.

Belongs to the prokaryotic pantothenate kinase family.

It is found in the cytoplasm. The enzyme catalyses (R)-pantothenate + ATP = (R)-4'-phosphopantothenate + ADP + H(+). It participates in cofactor biosynthesis; coenzyme A biosynthesis; CoA from (R)-pantothenate: step 1/5. This Streptococcus suis (strain 98HAH33) protein is Pantothenate kinase.